We begin with the raw amino-acid sequence, 90 residues long: uncharacterized protein (90 aa).

Residues methionine 1–alanine 26 form the signal peptide.

This is an uncharacterized protein from Bacillus subtilis (strain 168).